A 229-amino-acid chain; its full sequence is 7-cyano-7-deazaguanine synthase (229 aa).

Leu9–Leu19 contacts ATP. Residues Cys192, Cys202, Cys205, and Cys208 each contribute to the Zn(2+) site.

This sequence belongs to the QueC family. Zn(2+) serves as cofactor.

It catalyses the reaction 7-carboxy-7-deazaguanine + NH4(+) + ATP = 7-cyano-7-deazaguanine + ADP + phosphate + H2O + H(+). It participates in purine metabolism; 7-cyano-7-deazaguanine biosynthesis. Catalyzes the ATP-dependent conversion of 7-carboxy-7-deazaguanine (CDG) to 7-cyano-7-deazaguanine (preQ(0)). The polypeptide is 7-cyano-7-deazaguanine synthase (Kineococcus radiotolerans (strain ATCC BAA-149 / DSM 14245 / SRS30216)).